We begin with the raw amino-acid sequence, 179 residues long: Putative endogenous retrovirus group FC1 Env polyprotein (179 aa).

The signal sequence occupies residues 1–22 (MARPSPLCLLLLLTLLPPIVPS). Residues 23–179 (NSLLTEPPFR…SKLRIFRTYV (157 aa)) form a truncated surface protein region. Asparagine 69 carries an N-linked (GlcNAc...) asparagine glycan.

This sequence belongs to the gamma type-C retroviral envelope protein family. HERV class-I F(c)1 env subfamily.

The protein localises to the virion. Its function is as follows. Retroviral envelope proteins mediate receptor recognition and membrane fusion during early infection. Endogenous envelope proteins may have kept, lost or modified their original function during evolution. This chain is Putative endogenous retrovirus group FC1 Env polyprotein (ERVFC1), found in Gorilla gorilla gorilla (Western lowland gorilla).